We begin with the raw amino-acid sequence, 211 residues long: MGQKVNPVGFRLGVIRTWDSRWYAEADYSKLLHEDLKLRNFLKKRLYNSGVSKIEIERAANKAKINIYTARPGLIIGKKGAEVETLKKELAKLTDKEIYLNIQEVRKPELDAQLVAENVALQLERRVAFRRAMKKSVTSSLKFGAKGIRITCSGRLGGAEMSRTEWYREGRVPLHTLRADIDYGFAEAKTTYGIIGVKVLIFKGEVLPGQK.

A KH type-2 domain is found at Leu-38–Arg-106.

It belongs to the universal ribosomal protein uS3 family. In terms of assembly, part of the 30S ribosomal subunit. Forms a tight complex with proteins S10 and S14.

Its function is as follows. Binds the lower part of the 30S subunit head. Binds mRNA in the 70S ribosome, positioning it for translation. This is Small ribosomal subunit protein uS3 from Geobacter sulfurreducens (strain ATCC 51573 / DSM 12127 / PCA).